Here is a 440-residue protein sequence, read N- to C-terminus: Protein disulfide-isomerase A6 (440 aa).

The signal sequence occupies residues 1–19 (MALLVLGLVSCTFFLAVNG). Thioredoxin domains are found at residues 20-133 (LYSS…ALRQ) and 154-287 (SDSS…EDIA). Residues Cys55 and Cys58 each act as nucleophile in the active site. Cys55 and Cys58 are joined by a disulfide. Ser129 bears the Phosphoserine mark. Positions 141–161 (GRSGGYSSGKQGRSDSSSKKD) are disordered. Basic and acidic residues predominate over residues 152–161 (GRSDSSSKKD). Ser156 is subject to Phosphoserine; by FAM20C. Ser158 carries the post-translational modification Phosphoserine. Catalysis depends on nucleophile residues Cys190 and Cys193. Cys190 and Cys193 are oxidised to a cystine. Ser428 carries the phosphoserine modification. The short motif at 437-440 (KDEL) is the Prevents secretion from ER element.

Belongs to the protein disulfide isomerase family. In terms of assembly, part of a large chaperone multiprotein complex comprising DNAJB11, HSP90B1, HSPA5, HYOU, PDIA2, PDIA4, PDIA6, PPIB, SDF2L1, UGGT1 and very small amounts of ERP29, but not, or at very low levels, CALR nor CANX. Interacts with MICA on the surface of tumor cells, leading to MICA disulfide bond reduction which is required for its release from tumor cells. Interacts with ITGB3 following platelet stimulation. Interacts with ERN1; the interaction is direct. Interacts with EIF2AK3. Expressed in platelets (at protein level).

The protein localises to the endoplasmic reticulum lumen. It localises to the cell membrane. It is found in the melanosome. It catalyses the reaction Catalyzes the rearrangement of -S-S- bonds in proteins.. May function as a chaperone that inhibits aggregation of misfolded proteins. Negatively regulates the unfolded protein response (UPR) through binding to UPR sensors such as ERN1, which in turn inactivates ERN1 signaling. May also regulate the UPR via the EIF2AK3 UPR sensor. Plays a role in platelet aggregation and activation by agonists such as convulxin, collagen and thrombin. The chain is Protein disulfide-isomerase A6 (PDIA6) from Homo sapiens (Human).